We begin with the raw amino-acid sequence, 158 residues long: Putative ribosomal RNA large subunit methyltransferase H (158 aa).

S-adenosyl-L-methionine-binding positions include L76, G107, and 126–131 (LSRMTF).

This sequence belongs to the RNA methyltransferase RlmH family.

It localises to the cytoplasm. It carries out the reaction pseudouridine(1915) in 23S rRNA + S-adenosyl-L-methionine = N(3)-methylpseudouridine(1915) in 23S rRNA + S-adenosyl-L-homocysteine + H(+). Functionally, specifically methylates the pseudouridine at position 1915 (m3Psi1915) in 23S rRNA. The protein is Putative ribosomal RNA large subunit methyltransferase H of Methanocorpusculum labreanum (strain ATCC 43576 / DSM 4855 / Z).